Reading from the N-terminus, the 1334-residue chain is DNA-directed RNA polymerase subunit beta' (1334 aa).

Residues Cys213, Cys284, Cys291, and Cys294 each contribute to the Zn(2+) site. The span at 1299–1308 (SSRGSSRFSR) shows a compositional bias: low complexity. A disordered region spans residues 1299 to 1334 (SSRGSSRFSRQPISDRWSEADEEGEEDDFEEDYEEE). The segment covering 1318–1334 (ADEEGEEDDFEEDYEEE) has biased composition (acidic residues).

This sequence belongs to the RNA polymerase beta' chain family. RpoC2 subfamily. In cyanobacteria the RNAP catalytic core is composed of 2 alpha, 1 beta, 1 beta', 1 gamma and 1 omega subunit. When a sigma factor is associated with the core the holoenzyme is formed, which can initiate transcription. It depends on Zn(2+) as a cofactor.

The catalysed reaction is RNA(n) + a ribonucleoside 5'-triphosphate = RNA(n+1) + diphosphate. In terms of biological role, DNA-dependent RNA polymerase catalyzes the transcription of DNA into RNA using the four ribonucleoside triphosphates as substrates. This is DNA-directed RNA polymerase subunit beta' from Microcystis aeruginosa (strain NIES-843 / IAM M-2473).